The following is a 360-amino-acid chain: Endolytic murein transglycosylase (360 aa).

A helical membrane pass occupies residues 16–36 (IILSSIVVLFLIIGGAFLYGK).

Belongs to the transglycosylase MltG family.

The protein resides in the cell membrane. It catalyses the reaction a peptidoglycan chain = a peptidoglycan chain with N-acetyl-1,6-anhydromuramyl-[peptide] at the reducing end + a peptidoglycan chain with N-acetylglucosamine at the non-reducing end.. Functionally, functions as a peptidoglycan terminase that cleaves nascent peptidoglycan strands endolytically to terminate their elongation. This chain is Endolytic murein transglycosylase, found in Bacillus subtilis (strain 168).